Here is a 736-residue protein sequence, read N- to C-terminus: Catalase-peroxidase (736 aa).

The interval 1–21 (MSNEQKCPFSGTHGARTTVGT) is disordered. The tryptophyl-tyrosyl-methioninium (Trp-Tyr) (with M-250) cross-link spans 96–224 (WHSAGTYRTG…LAAVQMGLIY (129 aa)). His97 (proton acceptor) is an active-site residue. The tryptophyl-tyrosyl-methioninium (Tyr-Met) (with W-96) cross-link spans 224-250 (YVNPEGPDGNPDPVASGRDIRETFARM). His265 contacts heme b.

The protein belongs to the peroxidase family. Peroxidase/catalase subfamily. Homodimer or homotetramer. Heme b serves as cofactor. In terms of processing, formation of the three residue Trp-Tyr-Met cross-link is important for the catalase, but not the peroxidase activity of the enzyme.

It carries out the reaction H2O2 + AH2 = A + 2 H2O. The enzyme catalyses 2 H2O2 = O2 + 2 H2O. In terms of biological role, bifunctional enzyme with both catalase and broad-spectrum peroxidase activity. The chain is Catalase-peroxidase from Dechloromonas aromatica (strain RCB).